Here is a 301-residue protein sequence, read N- to C-terminus: ATP synthase subunit gamma, mitochondrial (301 aa).

It belongs to the ATPase gamma chain family. F-type ATPases have 2 components, CF(1) - the catalytic core - and CF(0) - the membrane proton channel. CF(1) has five subunits: alpha(3), beta(3), gamma(1), delta(1), epsilon(1). CF(0) has three main subunits: a, b and c.

It is found in the mitochondrion. It localises to the mitochondrion inner membrane. Its function is as follows. Mitochondrial membrane ATP synthase (F(1)F(0) ATP synthase or Complex V) produces ATP from ADP in the presence of a proton gradient across the membrane which is generated by electron transport complexes of the respiratory chain. F-type ATPases consist of two structural domains, F(1) - containing the extramembraneous catalytic core, and F(0) - containing the membrane proton channel, linked together by a central stalk and a peripheral stalk. During catalysis, ATP synthesis in the catalytic domain of F(1) is coupled via a rotary mechanism of the central stalk subunits to proton translocation. Part of the complex F(1) domain and the central stalk which is part of the complex rotary element. The gamma subunit protrudes into the catalytic domain formed of alpha(3)beta(3). Rotation of the central stalk against the surrounding alpha(3)beta(3) subunits leads to hydrolysis of ATP in three separate catalytic sites on the beta subunits. This is ATP synthase subunit gamma, mitochondrial (atp3) from Schizosaccharomyces pombe (strain 972 / ATCC 24843) (Fission yeast).